The primary structure comprises 110 residues: Iron-sulfur cluster assembly protein CyaY (110 aa).

This sequence belongs to the frataxin family.

Involved in iron-sulfur (Fe-S) cluster assembly. May act as a regulator of Fe-S biogenesis. In Pseudomonas entomophila (strain L48), this protein is Iron-sulfur cluster assembly protein CyaY.